The sequence spans 143 residues: Putative complexin-1 (143 aa).

The disordered stretch occupies residues 15–71 (NEVTGGLGLKDDGGEKTETGEDPEVVAARLEQEERRKEKHRKMEQEREKMRQGIRDK). Composition is skewed to basic and acidic residues over residues 23–33 (LKDDGGEKTET) and 44–71 (LEQE…IRDK). The stretch at 40-71 (VAARLEQEERRKEKHRKMEQEREKMRQGIRDK) forms a coiled coil.

This sequence belongs to the complexin/synaphin family.

The protein localises to the cytoplasm. It is found in the cytosol. In terms of biological role, positively regulates a late step in synaptic vesicle exocytosis. The protein is Putative complexin-1 (cpx-1) of Caenorhabditis briggsae.